The chain runs to 400 residues: Na(+)/H(+) antiporter NhaA (400 aa).

Transmembrane regions (helical) follow at residues 26–46 (AGGI…NSPL), 71–91 (LIHW…GMEV), 107–127 (IFPA…YWFI), 137–157 (GWAI…ALLS), 166–186 (IFLL…IALF), 189–209 (HGLS…LILL), 225–245 (AILW…GVII), 273–293 (FVIL…GIDV), 299–319 (PLLL…IFGF), 340–360 (IFAV…LASL), and 373–393 (LSRL…YLFL).

The protein belongs to the NhaA Na(+)/H(+) (TC 2.A.33) antiporter family.

It is found in the cell inner membrane. It carries out the reaction Na(+)(in) + 2 H(+)(out) = Na(+)(out) + 2 H(+)(in). Its function is as follows. Na(+)/H(+) antiporter that extrudes sodium in exchange for external protons. This chain is Na(+)/H(+) antiporter NhaA, found in Haemophilus influenzae (strain ATCC 51907 / DSM 11121 / KW20 / Rd).